The primary structure comprises 260 residues: Ubiquinone/menaquinone biosynthesis C-methyltransferase UbiE (260 aa).

S-adenosyl-L-methionine is bound by residues threonine 83, aspartate 104, and 132–133; that span reads NA.

This sequence belongs to the class I-like SAM-binding methyltransferase superfamily. MenG/UbiE family.

The catalysed reaction is a 2-demethylmenaquinol + S-adenosyl-L-methionine = a menaquinol + S-adenosyl-L-homocysteine + H(+). The enzyme catalyses a 2-methoxy-6-(all-trans-polyprenyl)benzene-1,4-diol + S-adenosyl-L-methionine = a 5-methoxy-2-methyl-3-(all-trans-polyprenyl)benzene-1,4-diol + S-adenosyl-L-homocysteine + H(+). The protein operates within quinol/quinone metabolism; menaquinone biosynthesis; menaquinol from 1,4-dihydroxy-2-naphthoate: step 2/2. It functions in the pathway cofactor biosynthesis; ubiquinone biosynthesis. Methyltransferase required for the conversion of demethylmenaquinol (DMKH2) to menaquinol (MKH2) and the conversion of 2-polyprenyl-6-methoxy-1,4-benzoquinol (DDMQH2) to 2-polyprenyl-3-methyl-6-methoxy-1,4-benzoquinol (DMQH2). This chain is Ubiquinone/menaquinone biosynthesis C-methyltransferase UbiE, found in Bartonella henselae (strain ATCC 49882 / DSM 28221 / CCUG 30454 / Houston 1) (Rochalimaea henselae).